A 727-amino-acid chain; its full sequence is Sodium-dependent neutral amino acid transporter SLC6A17 (727 aa).

Residues 1-68 (MPKNSKVTQR…DRPAWNSKLQ (68 aa)) are Cytoplasmic-facing. Residues S13 and S20 each carry the phosphoserine modification. Residues 69–89 (YILAQIGFSVGLGNIWRFPYL) traverse the membrane as a helical segment. Residues 90 to 96 (CQKNGGG) are Extracellular-facing. The chain crosses the membrane as a helical span at residues 97–116 (AYLVPYLVLLIIIGIPLFFL). At 117-140 (ELAVGQRIRRGSIGVWHYVCPRLG) the chain is on the cytoplasmic side. The chain crosses the membrane as a helical span at residues 141 to 161 (GIGFSSCIVCLFVGLYYNVII). The Extracellular portion of the chain corresponds to 162–224 (GWSVFYFFKS…NSISESGGLN (63 aa)). Residue N186 is glycosylated (N-linked (GlcNAc...) asparagine). Residues 225 to 243 (WKMTLCLLVAWSIVGMAVV) form a helical membrane-spanning segment. Residues 244–251 (KGIQSSGK) lie on the Cytoplasmic side of the membrane. The chain crosses the membrane as a helical span at residues 252 to 269 (VMYFSSLFPYVVLACFLV). The Extracellular portion of the chain corresponds to 270 to 304 (RGLLLRGAVDGILHMFTPKLDKMLDPQVWREAATQ). A helical transmembrane segment spans residues 305–322 (VFFALGLGFGGVIAFSSY). The Cytoplasmic portion of the chain corresponds to 323–333 (NKQDNNCHFDA). The helical transmembrane segment at 334 to 355 (ALVSFINFFTSVLATLVVFAVL) threads the bilayer. Residues 356 to 451 (GFKANIMNEK…FIAFTEAMTH (96 aa)) lie on the Extracellular side of the membrane. Position 377 is a phosphotyrosine (Y377). N393 is a glycosylation site (N-linked (GlcNAc...) asparagine). Residues 452 to 471 (FPASPFWSVMFFLMLINLGL) form a helical membrane-spanning segment. Topologically, residues 472-494 (GSMIGTMAGITTPIIDTFKVPKE) are cytoplasmic. Residues 495–513 (MFTVGCCVFAFFVGLLFVQ) traverse the membrane as a helical segment. Topologically, residues 514-528 (RSGNYFVTMFDDYSA) are extracellular. A helical transmembrane segment spans residues 529–549 (TLPLTVIVILENIAVAWIYGT). Topologically, residues 550 to 569 (KKFMQELTEMLGFQPYRFYF) are cytoplasmic. Residues 570–591 (YMWKFVSPLCMAVLTTASIIQL) traverse the membrane as a helical segment. Residues 592 to 618 (GVSPPGYSAWIKEEAAERYLYFPNWAM) are Extracellular-facing. A helical membrane pass occupies residues 619–641 (ALLITLIAVATLPIPVVFILRHF). The Cytoplasmic segment spans residues 642–727 (HLLSDGSNTL…LLASTPESEL (86 aa)). Phosphoserine occurs at positions 665 and 701. Positions 680 to 727 (VPSEAPSPMPTHRSYLGPGSTSPLDNSNNPNGRYGSGYLLASTPESEL) are disordered. Residues 698–710 (GSTSPLDNSNNPN) show a composition bias toward polar residues.

Belongs to the sodium:neurotransmitter symporter (SNF) (TC 2.A.22) family. Expressed in the brain. The strongest expression levels in embryonic, postnatal, and adult stages are found in both cortical and hippocampal tissues.

The protein resides in the cytoplasmic vesicle. It is found in the secretory vesicle. Its subcellular location is the synaptic vesicle membrane. The protein localises to the postsynapse. It localises to the presynapse. The catalysed reaction is L-proline(in) + Na(+)(in) = L-proline(out) + Na(+)(out). It catalyses the reaction L-leucine(in) + Na(+)(in) = L-leucine(out) + Na(+)(out). It carries out the reaction glycine(in) + Na(+)(in) = glycine(out) + Na(+)(out). The enzyme catalyses L-alanine(in) + Na(+)(in) = L-alanine(out) + Na(+)(out). The catalysed reaction is L-glutamine(in) + Na(+)(in) = L-glutamine(out) + Na(+)(out). Synaptic vesicle transporter with apparent selectivity for neutral amino acids. The transport is sodium-coupled but chloride-independent, likely driven by the proton electrochemical gradient generated by vacuolar H(+)-ATPase in an overall electrogenic mechanism. May contribute to the synaptic uptake of neurotransmitter precursors in a process coupled in part to vesicle exocytosis. The sequence is that of Sodium-dependent neutral amino acid transporter SLC6A17 from Mus musculus (Mouse).